The following is a 523-amino-acid chain: Cyclin-dependent kinase 17 (523 aa).

Serine 9 is subject to Phosphoserine. Positions threonine 30–histidine 55 are disordered. Serine 80, serine 92, and serine 105 each carry phosphoserine. The interval methionine 103–proline 123 is disordered. Polar residues predominate over residues aspartate 110–proline 123. Phosphoserine occurs at positions 137, 146, 165, and 180. Residues tyrosine 192–phenylalanine 473 form the Protein kinase domain. Residues leucine 198–valine 206 and lysine 221 contribute to the ATP site. Aspartate 313 functions as the Proton acceptor in the catalytic mechanism. Residues proline 501–phenylalanine 523 form a disordered region. The segment covering glycine 514–phenylalanine 523 has biased composition (basic residues).

It belongs to the protein kinase superfamily. CMGC Ser/Thr protein kinase family. CDC2/CDKX subfamily. As to quaternary structure, found in a complex containing CABLES1, CDK16 and TDRD7. Interacts with TDRD7.

It catalyses the reaction L-seryl-[protein] + ATP = O-phospho-L-seryl-[protein] + ADP + H(+). It carries out the reaction L-threonyl-[protein] + ATP = O-phospho-L-threonyl-[protein] + ADP + H(+). In terms of biological role, may play a role in terminally differentiated neurons. Has a Ser/Thr-phosphorylating activity for histone H1. This Homo sapiens (Human) protein is Cyclin-dependent kinase 17 (CDK17).